A 91-amino-acid polypeptide reads, in one-letter code: Peptide Ctry2146 (91 aa).

Positions 1 to 23 (MKTQTLLVTFLVVLLMVATQTEA) are cleaved as a signal peptide. The residue at position 33 (leucine 33) is a Leucine amide. Positions 37 to 91 (GLLDGLLGKRGLLFGKRGPLFGKRALTNQDFLDFAYDPSLSAADMDALEMLFEDY) are excised as a propeptide.

It belongs to the non-disulfide-bridged peptide (NDBP) superfamily. Short antimicrobial peptide (group 4) family. As to expression, expressed by the venom gland.

The protein localises to the secreted. The protein resides in the target cell membrane. Its function is as follows. Antimicrobial peptide. This Chaerilus tryznai (Scorpion) protein is Peptide Ctry2146.